The primary structure comprises 91 residues: Conotoxin Im9.1 (91 aa).

The signal sequence occupies residues 1 to 23 (MSKVGVVPLIFLVLLSIAALQNG). A propeptide spanning residues 24 to 55 (DDPRRQRDEKQSPQGDILRSTLTKYSYNIQRR) is cleaved from the precursor. Intrachain disulfides connect Cys-56/Cys-72, Cys-63/Cys-83, and Cys-66/Cys-86.

Belongs to the conotoxin M superfamily. In terms of tissue distribution, expressed by the venom duct.

The protein resides in the secreted. Probable neurotoxin. The polypeptide is Conotoxin Im9.1 (Conus imperialis (Imperial cone)).